Here is a 435-residue protein sequence, read N- to C-terminus: D-inositol 3-phosphate glycosyltransferase (435 aa).

His16 lines the 1D-myo-inositol 3-phosphate pocket. UDP-N-acetyl-alpha-D-glucosamine-binding positions include 22–23 (QP) and Gly30. 1D-myo-inositol 3-phosphate contacts are provided by residues 27-32 (DAGGMN), Lys85, Tyr118, Thr142, and Arg162. 3 residues coordinate UDP-N-acetyl-alpha-D-glucosamine: Arg237, Lys242, and Val303. Mg(2+)-binding residues include Tyr312, Arg313, and Ala315. Positions 325 and 333 each coordinate UDP-N-acetyl-alpha-D-glucosamine. Thr339 is a Mg(2+) binding site.

It belongs to the glycosyltransferase group 1 family. MshA subfamily. Homodimer.

The enzyme catalyses 1D-myo-inositol 3-phosphate + UDP-N-acetyl-alpha-D-glucosamine = 1D-myo-inositol 2-acetamido-2-deoxy-alpha-D-glucopyranoside 3-phosphate + UDP + H(+). Catalyzes the transfer of a N-acetyl-glucosamine moiety to 1D-myo-inositol 3-phosphate to produce 1D-myo-inositol 2-acetamido-2-deoxy-glucopyranoside 3-phosphate in the mycothiol biosynthesis pathway. This Kineococcus radiotolerans (strain ATCC BAA-149 / DSM 14245 / SRS30216) protein is D-inositol 3-phosphate glycosyltransferase.